A 177-amino-acid polypeptide reads, in one-letter code: Ribosome rescue factor SmrB (177 aa).

The 76-residue stretch at 92 to 167 (LDLHGLTRQK…GDAAILVLIE (76 aa)) folds into the Smr domain.

The protein belongs to the SmrB family. As to quaternary structure, associates with collided ribosomes, but not with correctly translating polysomes.

In terms of biological role, acts as a ribosome collision sensor. Detects stalled/collided disomes (pairs of ribosomes where the leading ribosome is stalled and a second ribosome has collided with it) and endonucleolytically cleaves mRNA at the 5' boundary of the stalled ribosome. Stalled/collided disomes form a new interface (primarily via the 30S subunits) that binds SmrB. Cleaved mRNA becomes available for tmRNA ligation, leading to ribosomal subunit dissociation and rescue of stalled ribosomes. This chain is Ribosome rescue factor SmrB, found in Haemophilus ducreyi (strain 35000HP / ATCC 700724).